We begin with the raw amino-acid sequence, 89 residues long: MEIILGFVALACGLIVGLGAIGASIGIGLMGGKFLESSARQPELINELQTKMFILAGLIDAAFLIGVAIALMFAFANPFVSTLLANMPK.

A run of 2 helical transmembrane segments spans residues 3-23 and 53-73; these read IILG…AIGA and FILA…ALMF.

Belongs to the ATPase C chain family. In terms of assembly, F-type ATPases have 2 components, F(1) - the catalytic core - and F(0) - the membrane proton channel. F(1) has five subunits: alpha(3), beta(3), gamma(1), delta(1), epsilon(1). F(0) has three main subunits: a(1), b(2) and c(10-14). The alpha and beta chains form an alternating ring which encloses part of the gamma chain. F(1) is attached to F(0) by a central stalk formed by the gamma and epsilon chains, while a peripheral stalk is formed by the delta and b chains.

It localises to the cell inner membrane. F(1)F(0) ATP synthase produces ATP from ADP in the presence of a proton or sodium gradient. F-type ATPases consist of two structural domains, F(1) containing the extramembraneous catalytic core and F(0) containing the membrane proton channel, linked together by a central stalk and a peripheral stalk. During catalysis, ATP synthesis in the catalytic domain of F(1) is coupled via a rotary mechanism of the central stalk subunits to proton translocation. In terms of biological role, key component of the F(0) channel; it plays a direct role in translocation across the membrane. A homomeric c-ring of between 10-14 subunits forms the central stalk rotor element with the F(1) delta and epsilon subunits. This is ATP synthase subunit c from Verminephrobacter eiseniae (strain EF01-2).